Reading from the N-terminus, the 519-residue chain is Histidine--tRNA ligase (519 aa).

This sequence belongs to the class-II aminoacyl-tRNA synthetase family. In terms of assembly, homodimer.

The protein localises to the cytoplasm. It carries out the reaction tRNA(His) + L-histidine + ATP = L-histidyl-tRNA(His) + AMP + diphosphate + H(+). This is Histidine--tRNA ligase from Roseobacter denitrificans (strain ATCC 33942 / OCh 114) (Erythrobacter sp. (strain OCh 114)).